The following is a 438-amino-acid chain: Serine--tRNA ligase (438 aa).

245–247 provides a ligand contact to L-serine; it reads TSE. Position 276–278 (276–278) interacts with ATP; the sequence is RSE. Glu-299 is a binding site for L-serine. 363–366 is a binding site for ATP; that stretch reads EISS. Position 398 (Ser-398) interacts with L-serine.

The protein belongs to the class-II aminoacyl-tRNA synthetase family. Type-1 seryl-tRNA synthetase subfamily. In terms of assembly, homodimer. The tRNA molecule binds across the dimer.

It localises to the cytoplasm. The catalysed reaction is tRNA(Ser) + L-serine + ATP = L-seryl-tRNA(Ser) + AMP + diphosphate + H(+). The enzyme catalyses tRNA(Sec) + L-serine + ATP = L-seryl-tRNA(Sec) + AMP + diphosphate + H(+). The protein operates within aminoacyl-tRNA biosynthesis; selenocysteinyl-tRNA(Sec) biosynthesis; L-seryl-tRNA(Sec) from L-serine and tRNA(Sec): step 1/1. Its function is as follows. Catalyzes the attachment of serine to tRNA(Ser). Is also able to aminoacylate tRNA(Sec) with serine, to form the misacylated tRNA L-seryl-tRNA(Sec), which will be further converted into selenocysteinyl-tRNA(Sec). In Verminephrobacter eiseniae (strain EF01-2), this protein is Serine--tRNA ligase.